The sequence spans 758 residues: Glucocorticoid receptor (758 aa).

Disordered stretches follow at residues 1 to 61 and 349 to 382; these read MDPG…SANG and GMSS…PSGP. The segment at 1-386 is modulating; sequence MDPGGLKHSK…AKPSGPTHKI (386 aa). The segment covering 26 to 42 has biased composition (low complexity); sequence GSFSGDTGGSKSTTSTS. 2 NR C4-type zinc fingers span residues 387 to 407 and 432 to 456; these read CLVC…CGSC and CAGR…FRKC. A DNA-binding region (nuclear receptor) is located at residues 387–461; that stretch reads CLVCSDEASG…RFRKCLQAGM (75 aa). Residues 462 to 498 are hinge; that stretch reads NLEARKNKKLIRLKGQQTTMEPNPPPPDERACALIPK. Positions 499–733 constitute an NR LBD domain; the sequence is SMPQLVPTML…FPEMLAEIIS (235 aa).

The protein belongs to the nuclear hormone receptor family. NR3 subfamily. In terms of assembly, heteromultimeric cytoplasmic complex with HSP90AA1, HSPA1A/HSPA1B, and FKBP5 or another immunophilin such as PPID, STIP1, or the immunophilin homolog PPP5C. Upon ligand binding FKBP5 dissociates from the complex and FKBP4 takes its place, thereby linking the complex to dynein and mediating transport to the nucleus, where the complex dissociates. Directly interacts with UNC45A. Binds to DNA as a homodimer, and as heterodimer with NR3C2 or the retinoid X receptor. Binds STAT5A and STAT5B homodimers and heterodimers. Interacts with NRIP1, POU2F1, POU2F2 and TRIM28. Interacts with several coactivator complexes, including the SMARCA4 complex, CREBBP/EP300, TADA2L (Ada complex) and p160 coactivators such as NCOA2 and NCOA6. Interaction with BAG1 inhibits transactivation. Interacts with HEXIM1, PELP1 and TGFB1I1. Interacts with NCOA1, NCOA3, SMARCA4, SMARCC1, SMARCD1, and SMARCE1. Phosphorylated in the absence of hormone; becomes hyperphosphorylated in the presence of glucocorticoids. May be dephosphorylated by PPP5C, attenuates NR3C1 action. As to expression, isoform 1 is expressed in all tissues tested including liver, gills, intestine, skeletal muscle, kidney, heart, spleen, stomach, brain, pituitary, ovary, testis, skin and bladder. Isoform 2 is found only in testis.

The protein resides in the cytoplasm. It localises to the nucleus. The protein localises to the mitochondrion. Its subcellular location is the cytoskeleton. It is found in the spindle. The protein resides in the microtubule organizing center. It localises to the centrosome. Receptor for glucocorticoids (GC). Has a dual mode of action: as a transcription factor that binds to glucocorticoid response elements (GRE), both for nuclear and mitochondrial DNA, and as a modulator of other transcription factors. Affects inflammatory responses, cellular proliferation and differentiation in target tissues. Involved in chromatin remodeling. Plays a role in rapid mRNA degradation by binding to the 5' UTR of target mRNAs and interacting with PNRC2 in a ligand-dependent manner which recruits the RNA helicase UPF1 and the mRNA-decapping enzyme DCP1A, leading to RNA decay. Could act as a coactivator for STAT5-dependent transcription upon growth hormone (GH) stimulation and could reveal an essential role of hepatic GR in the control of body growth. Mediates glucocorticoid-induced apoptosis. Promotes accurate chromosome segregation during mitosis. May act as a tumor suppressor. May play a negative role in adipogenesis through the regulation of lipolytic and antilipogenic gene expression. This Oncorhynchus mykiss (Rainbow trout) protein is Glucocorticoid receptor (nr3c1).